The primary structure comprises 483 residues: Glutamate--tRNA ligase (483 aa).

A 'HIGH' region motif is present at residues 9–19; that stretch reads PSPTGFLHIGN. A 'KMSKS' region motif is present at residues 253–257; the sequence is KLSKR. K256 provides a ligand contact to ATP.

This sequence belongs to the class-I aminoacyl-tRNA synthetase family. Glutamate--tRNA ligase type 1 subfamily. As to quaternary structure, monomer.

It is found in the cytoplasm. It catalyses the reaction tRNA(Glu) + L-glutamate + ATP = L-glutamyl-tRNA(Glu) + AMP + diphosphate. Its function is as follows. Catalyzes the attachment of glutamate to tRNA(Glu) in a two-step reaction: glutamate is first activated by ATP to form Glu-AMP and then transferred to the acceptor end of tRNA(Glu). The chain is Glutamate--tRNA ligase from Mycoplasma capricolum subsp. capricolum (strain California kid / ATCC 27343 / NCTC 10154).